We begin with the raw amino-acid sequence, 209 residues long: Probable transcriptional regulator ycf29 (209 aa).

A Response regulatory domain is found at 4–120; that stretch reads NLMLVENDTV…ELVSLIKNLI (117 aa). Asp-53 carries the 4-aspartylphosphate modification. The HTH luxR-type domain maps to 139 to 204; that stretch reads PLFQLLYLTP…LLVKYSIKNN (66 aa).

Its subcellular location is the plastid. The protein localises to the chloroplast. The sequence is that of Probable transcriptional regulator ycf29 (ycf29) from Porphyra purpurea (Red seaweed).